The primary structure comprises 354 residues: Opsin-1, short-wave-sensitive 2 (354 aa).

At 1 to 43 the chain is on the extracellular side; that stretch reads MKQQQQTPELFEDFHMPITLDVSNISAYSPFLVPQDHLGHSGV. The N-linked (GlcNAc...) asparagine glycan is linked to Asn-24. Residues 44-68 form a helical membrane-spanning segment; that stretch reads FMGMSAFMLFLFIAGTAINVLTIVC. Topologically, residues 69–80 are cytoplasmic; that stretch reads TIQYKKLRSHLN. A helical membrane pass occupies residues 81–106; the sequence is YILVNLAISNLWVSVFGSSVAFYAFY. The Extracellular segment spans residues 107 to 120; it reads KKYFVFGPIGCKIE. Cys-117 and Cys-194 are joined by a disulfide. A helical transmembrane segment spans residues 121-140; that stretch reads GFTSTIGGMVSLWSLAVVAL. Residues 141 to 159 lie on the Cytoplasmic side of the membrane; it reads ERWLVICKPLGNFTFKTPH. Residues 160–183 form a helical membrane-spanning segment; sequence AIAGCILPWCMALAAGLPPLLGWS. The Extracellular portion of the chain corresponds to 184-209; sequence RYIPEGLQCSCGPDWYTTNNKFNNES. Asn-207 carries an N-linked (GlcNAc...) asparagine glycan. Residues 210–237 form a helical membrane-spanning segment; it reads YVMFLFCFCFAVPFSTIVFCYGQLLITL. At 238–259 the chain is on the cytoplasmic side; the sequence is KLAAKAQADSASTQKAEREVTK. The helical transmembrane segment at 260–283 threads the bilayer; that stretch reads MVVVMVFGFLICWGPYAIFAIWVV. Topologically, residues 284-291 are extracellular; that stretch reads SNRGAPFD. The helical transmembrane segment at 292–316 threads the bilayer; that stretch reads LRLATIPSCLCKASTVYNPVIYVLM. Lys-303 is modified (N6-(retinylidene)lysine). Residues 317 to 354 are Cytoplasmic-facing; sequence NKQFRSCMMKMVFNKNIEEDEASSSSQVTQVSSVAPEK.

The protein belongs to the G-protein coupled receptor 1 family. Opsin subfamily. Phosphorylated on some or all of the serine and threonine residues present in the C-terminal region. In terms of tissue distribution, retinal long single cone outer segments.

Its subcellular location is the membrane. In terms of biological role, visual pigments are the light-absorbing molecules that mediate vision. They consist of an apoprotein, opsin, covalently linked to cis-retinal. The sequence is that of Opsin-1, short-wave-sensitive 2 (opn1sw2) from Danio rerio (Zebrafish).